We begin with the raw amino-acid sequence, 299 residues long: Bifunctional phosphoglucose/phosphomannose isomerase (299 aa).

One can recognise an SIS domain in the interval 27–177 (DEVEITPSSR…IHKLMEDFQK (151 aa)). D-fructose 6-phosphate is bound by residues Gly44, Ser45, Ser84, Ser86, Thr89, and Arg132. The active-site Proton acceptor is the Glu200. His216 and Lys295 together coordinate D-fructose 6-phosphate. His216 functions as the Proton donor in the catalytic mechanism. The Proton acceptor role is filled by Lys295.

The protein belongs to the PGI/PMI family. As to quaternary structure, homodimer.

The catalysed reaction is alpha-D-glucose 6-phosphate = beta-D-fructose 6-phosphate. It catalyses the reaction D-mannose 6-phosphate = D-fructose 6-phosphate. Presence or absence of metal ions or EDTA does not significantly affect the phosphoglucose isomerase activity. Dual specificity isomerase that catalyzes the isomerization of both glucose-6-phosphate and mannose-6-phosphate to fructose-6-phosphate with nearly similar catalytic efficiency. Also catalyzes the epimerization of mannose 6-phosphate to glucose 6-phosphate but the rate of epimerization reaction is 20-fold lower than that of isomerization reaction. The protein is Bifunctional phosphoglucose/phosphomannose isomerase of Pyrobaculum calidifontis (strain DSM 21063 / JCM 11548 / VA1).